The chain runs to 329 residues: Cathepsin K (329 aa).

A signal peptide spans 1–15 (MWGLTVLLLPVVSFA). Positions 16 to 114 (LYPEEILDTQ…TLYIPDWEGR (99 aa)) are cleaved as a propeptide — activation peptide. Asn-103 carries N-linked (GlcNAc...) asparagine glycosylation. 3 disulfide bridges follow: Cys-136/Cys-177, Cys-170/Cys-210, and Cys-269/Cys-318. Cys-139 is a catalytic residue. Residues His-276 and Asn-296 contribute to the active site.

Belongs to the peptidase C1 family.

The protein localises to the lysosome. The protein resides in the secreted. It is found in the apical cell membrane. The enzyme catalyses Broad proteolytic activity. With small-molecule substrates and inhibitors, the major determinant of specificity is P2, which is preferably Leu, Met &gt; Phe, and not Arg.. In terms of biological role, thiol protease involved in osteoclastic bone resorption and may participate partially in the disorder of bone remodeling. Displays potent endoprotease activity against fibrinogen at acid pH. May play an important role in extracellular matrix degradation. Involved in the release of thyroid hormone thyroxine (T4) by limited proteolysis of TG/thyroglobulin in the thyroid follicle lumen. The chain is Cathepsin K (CTSK) from Bos taurus (Bovine).